Reading from the N-terminus, the 226-residue chain is Ribose-5-phosphate isomerase A (226 aa).

Residues 28–31 (TGST), 80–83 (DGAD), and 93–96 (KGGG) contribute to the substrate site. Catalysis depends on Glu-102, which acts as the Proton acceptor. Lys-120 is a substrate binding site.

Belongs to the ribose 5-phosphate isomerase family. In terms of assembly, homodimer.

The enzyme catalyses aldehydo-D-ribose 5-phosphate = D-ribulose 5-phosphate. It functions in the pathway carbohydrate degradation; pentose phosphate pathway; D-ribose 5-phosphate from D-ribulose 5-phosphate (non-oxidative stage): step 1/1. In terms of biological role, catalyzes the reversible conversion of ribose-5-phosphate to ribulose 5-phosphate. This Caulobacter sp. (strain K31) protein is Ribose-5-phosphate isomerase A.